The chain runs to 182 residues: Thioredoxin X, chloroplastic (182 aa).

The transit peptide at 1–67 (MDSIVSSSTI…TRKSSSSVIR (67 aa)) directs the protein to the chloroplast. A Thioredoxin domain is found at 68–177 (CGGIKEIGES…LKEYIDGLLN (110 aa)). Active-site nucleophile residues include cysteine 99 and cysteine 102. A disulfide bridge links cysteine 99 with cysteine 102.

The protein belongs to the thioredoxin family. Predominantly expressed in leaves.

The protein resides in the plastid. The protein localises to the chloroplast stroma. Functionally, probable thiol-disulfide oxidoreductase that may participate in various redox reactions. This Arabidopsis thaliana (Mouse-ear cress) protein is Thioredoxin X, chloroplastic (ATHX).